Consider the following 152-residue polypeptide: Large ribosomal subunit protein bL9 (152 aa).

The protein belongs to the bacterial ribosomal protein bL9 family.

In terms of biological role, binds to the 23S rRNA. This chain is Large ribosomal subunit protein bL9, found in Synechococcus elongatus (strain ATCC 33912 / PCC 7942 / FACHB-805) (Anacystis nidulans R2).